Consider the following 290-residue polypeptide: Aquaporin-12 (290 aa).

2 helical membrane passes run 1-21 (MASL…CEVA) and 67-87 (FGPD…GVTF). Residues 93–95 (NPT) carry the NPA 1 motif. Transmembrane regions (helical) follow at residues 112-138 (LLKL…WELS), 158-178 (SVLQ…LSLL), and 191-211 (ALAL…SAFF). Positions 212–214 (NPA) match the NPA 2 motif. Residues 228–248 (LLEYAHVYCLGPVAGMILAVL) form a helical membrane-spanning segment. The tract at residues 271–290 (RTPRGKLSPGSVDAKMHKGE) is disordered.

The protein belongs to the MIP/aquaporin (TC 1.A.8) family. AQP11/AQP12 subfamily. As to expression, restricted to pancreatic acinar cells.

The protein localises to the membrane. In terms of biological role, aquaporins facilitate the transport of water and small neutral solutes across cell membranes. This chain is Aquaporin-12 (Aqp12), found in Mus musculus (Mouse).